Reading from the N-terminus, the 301-residue chain is Transcription elongation factor A protein 1 (301 aa).

An N-acetylmethionine modification is found at methionine 1. Residues aspartate 3 to proline 80 enclose the TFIIS N-terminal domain. Lysine 55 is covalently cross-linked (Glycyl lysine isopeptide (Lys-Gly) (interchain with G-Cter in ubiquitin)). A phosphoserine mark is found at serine 57, serine 81, serine 97, and serine 100. A compositionally biased stretch (basic and acidic residues) spans leucine 76–proline 93. The disordered stretch occupies residues leucine 76 to serine 139. The 117-residue stretch at valine 140–threonine 256 folds into the TFIIS central domain. Residues aspartate 259–lysine 299 form a TFIIS-type zinc finger. Zn(2+) is bound by residues cysteine 263, cysteine 266, cysteine 291, and cysteine 294.

It belongs to the TFS-II family. Interacts with EAF2. Associates with UBR5 and forms a transcription regulatory complex made of CDK9, Pol II, UBR5 and TCEA1/TFIIS. Part of TBP-based Pol II pre-initiation complex (PIC), in which Pol II core assembles with general transcription factors and other specific initiation factors including GTF2E1, GTF2E2, GTF2F1, GTF2F2, TCEA1, ERCC2, ERCC3, GTF2H2, GTF2H3, GTF2H4, GTF2H5, GTF2A1, GTF2A2, GTF2B and TBP; this large multi-subunit PIC complex mediates DNA unwinding and targets Pol II core to the transcription start site where the first phosphodiester bond forms.

It localises to the nucleus. Functionally, necessary for efficient RNA polymerase II transcription elongation past template-encoded arresting sites. The arresting sites in DNA have the property of trapping a certain fraction of elongating RNA polymerases that pass through, resulting in locked ternary complexes. Cleavage of the nascent transcript by S-II allows the resumption of elongation from the new 3'-terminus. The chain is Transcription elongation factor A protein 1 (Tcea1) from Mus musculus (Mouse).